The primary structure comprises 180 residues: Putative manganese efflux pump MntP (180 aa).

The next 6 helical transmembrane spans lie at 4–24 (FVTICIMAAALGMDAFSVALG), 40–60 (LTIGLFHVAMPLAGMAVGKWL), 64–84 (FDVIATYIGGGLLLVIGVQMA), 103–123 (LLLFAVGVSLDSFSAGLSFGI), 129–149 (FVTVGMIGAMSMVMSWIGLIV), and 156–176 (FLGAYGELLGGLVLIGFGLKI).

This sequence belongs to the MntP (TC 9.B.29) family.

The protein resides in the cell membrane. Its function is as follows. Probably functions as a manganese efflux pump. The sequence is that of Putative manganese efflux pump MntP from Shouchella clausii (strain KSM-K16) (Alkalihalobacillus clausii).